The following is a 708-amino-acid chain: Protein psiF (708 aa).

The first 19 residues, M1–A19, serve as a signal peptide directing secretion. Topologically, residues D20–G643 are extracellular. 8 N-linked (GlcNAc...) asparagine glycosylation sites follow: N78, N116, N222, N317, N318, N371, N498, and N600. A PA14 domain is found at T103 to K263. Residues I644–I664 traverse the membrane as a helical segment. At F665–E708 the chain is on the cytoplasmic side. Polar residues predominate over residues M682 to L702. Positions M682–E708 are disordered.

It belongs to the prespore-cell-inducing factor family. Forms a complex with dicB.

It localises to the membrane. The protein resides in the secreted. Functionally, acts as a quorum sensing protein regulating discoidin gene expression during growth and development. D.discoideum is a single-celled amoebae and switches to multicellular development when food becomes limited. As the growing cells reach a high density, they begin expressing discoidin genes. The ability of psiF/dicA to induce discoidin gene expression when present in conditioned medium, suggests that it allows cells to sense their local density. In Dictyostelium discoideum (Social amoeba), this protein is Protein psiF (psiF).